A 277-amino-acid chain; its full sequence is UPF0276 protein PSEEN3355 (277 aa).

It belongs to the UPF0276 family.

In Pseudomonas entomophila (strain L48), this protein is UPF0276 protein PSEEN3355.